A 327-amino-acid chain; its full sequence is Asnovolin J 5',6'-dehydrogenase nvfM (327 aa).

A helical membrane pass occupies residues 9–29 (VAIVGASGVTGGSIVNGLLAL). Residues 13–19 (GASGVTG) and Lys47 contribute to the NADP(+) site. Lys130 serves as the catalytic Proton acceptor.

This sequence belongs to the NmrA-type oxidoreductase family.

Its subcellular location is the membrane. The enzyme catalyses asnovolin K + AH2 = asnovolin A + A. It catalyses the reaction chermesin D methyl ester + AH2 = asnovolin J + A. The protein operates within secondary metabolite biosynthesis; terpenoid biosynthesis. In terms of biological role, asnovolin J 5',6'-dehydrogenase; part of the gene cluster that mediates the biosynthesis of novofumigatonin, a heavily oxygenated meroterpenoid containing a unique orthoester moiety. The first step of the pathway is the synthesis of 3,5-dimethylorsellinic acid (DMOA) by the polyketide synthase nvfA via condensation of one acetyl-CoA starter unit with 3 malonyl-CoA units and 2 methylations. DMOA is then converted to farnesyl-DMOA by the farnesyltransferase nvfB. Epoxydation by FAD-dependent monooxygenase nvfK, followed by a protonation-initiated cyclization catalyzed by the terpene cyclase nvfL leads to the production of asnavolin H. The short chain dehydrogenase nvfC then as a 3-OH dehydrogenase of asnovolin H to yield chemesin D. There are two branches to synthesize asnovolin A from chemesin D. In one branch, chemesin D undergoes Baeyer-Villiger oxidation by nvfH, methylation by nvfJ, and enoyl reduction by the nvfM D enoylreductase that reduces the double bond between C-5'and C-6', to form respectively asnovolin I, asnovolin K, and asnovolin A. In the other branch, the methylation precedes the Baeyer-Villiger oxidation and the enoyl reduction to yield asnovolin A via the asnovolin J intermediate. Asnovolin A is further converted to fumigatonoid A by the Fe(II)/2-oxoglutarate-dependent dioxygenase nvfI that catalyzes an endoperoxidation reaction. The alpha/beta hydrolase nvfD then acts as an epimerase that converts fumigatonoid A to its C-5' epimer, which then undergoes spontaneous or nvfD-catalyzed lactonization. The following step utilizes the ketoreductase nvfG to produce fumigatonoid B. The dioxygenase nvfE further converts fumigatonoid B into fumigatonoid C. Finally the Fe(II)/2-oxoglutarate-dependent dioxygenase nvfF catalyzes two rounds of oxidation to transform fumigatonoid C into the end product, novofumigatonin A. In Aspergillus novofumigatus (strain IBT 16806), this protein is Asnovolin J 5',6'-dehydrogenase nvfM.